Consider the following 344-residue polypeptide: G-protein coupled receptor str-217 (344 aa).

Topologically, residues 1–10 (MLLFQKTLSR) are extracellular. A helical transmembrane segment spans residues 11–31 (VAAPISVAANLILILLIIFKS). Residues 32–39 (PAQMGNYK) are Cytoplasmic-facing. Residues 40–60 (YLLIGLSIFEMSYAVLDVVSE) form a helical membrane-spanning segment. The Extracellular portion of the chain corresponds to 61-88 (TTVLSIKKSFVVVVPYKDRSFGQETAMD). Residues 89 to 109 (INLIYCGFFGFSMGMFVVIFA) traverse the membrane as a helical segment. The Cytoplasmic segment spans residues 110-128 (YRSFLTTGNTILRKFEGFK). A helical transmembrane segment spans residues 129 to 149 (IISWFAYPLFYAIVWILVAWG). Residues 150 to 195 (PLASFPEMDIVVRPFLLDELNMTVDEVAYTGRLFYSTIDNSLRYSA) lie on the Extracellular side of the membrane. N-linked (GlcNAc...) asparagine glycosylation occurs at asparagine 170. The helical transmembrane segment at 196 to 216 (ILTGVLQWVLTASSLFLVIFF) threads the bilayer. Residues 217–256 (GLRCYFHYGKLVQLTDVQSIRLRQLQNQLFLALVCQATVP) lie on the Cytoplasmic side of the membrane. The helical transmembrane segment at 257–277 (LILMHIPVTILYTCCVLNIVF) threads the bilayer. Residues 278–279 (NP) are Extracellular-facing. The chain crosses the membrane as a helical span at residues 280 to 300 (FSVATTIALFPAIDPLPTIFI). Residues 301–344 (VKNYRVALFEFVCPSCLCWSETLKHMGSNRITSYRSNTVNALSM) are Cytoplasmic-facing.

The protein belongs to the nematode receptor-like protein str family. Expressed in the ADL chemosensory neurons.

The protein localises to the cell membrane. Probable G-protein coupled receptor. The sequence is that of G-protein coupled receptor str-217 from Caenorhabditis elegans.